The following is a 231-amino-acid chain: 7-cyano-7-deazaguanine synthase (231 aa).

ATP is bound at residue 8-18; the sequence is FSGGQDSTTCL. Positions 188, 197, 200, and 203 each coordinate Zn(2+).

It belongs to the QueC family. The cofactor is Zn(2+).

The catalysed reaction is 7-carboxy-7-deazaguanine + NH4(+) + ATP = 7-cyano-7-deazaguanine + ADP + phosphate + H2O + H(+). Its pathway is purine metabolism; 7-cyano-7-deazaguanine biosynthesis. In terms of biological role, catalyzes the ATP-dependent conversion of 7-carboxy-7-deazaguanine (CDG) to 7-cyano-7-deazaguanine (preQ(0)). This is 7-cyano-7-deazaguanine synthase from Cronobacter sakazakii (strain ATCC BAA-894) (Enterobacter sakazakii).